Here is a 143-residue protein sequence, read N- to C-terminus: Nucleoside diphosphate kinase (143 aa).

The ATP site is built by lysine 11, phenylalanine 59, arginine 87, threonine 93, arginine 104, and asparagine 114. The active-site Pros-phosphohistidine intermediate is histidine 117.

It belongs to the NDK family. As to quaternary structure, homotetramer. Requires Mg(2+) as cofactor.

Its subcellular location is the cytoplasm. It catalyses the reaction a 2'-deoxyribonucleoside 5'-diphosphate + ATP = a 2'-deoxyribonucleoside 5'-triphosphate + ADP. It carries out the reaction a ribonucleoside 5'-diphosphate + ATP = a ribonucleoside 5'-triphosphate + ADP. Functionally, major role in the synthesis of nucleoside triphosphates other than ATP. The ATP gamma phosphate is transferred to the NDP beta phosphate via a ping-pong mechanism, using a phosphorylated active-site intermediate. This chain is Nucleoside diphosphate kinase, found in Alcanivorax borkumensis (strain ATCC 700651 / DSM 11573 / NCIMB 13689 / SK2).